A 172-amino-acid polypeptide reads, in one-letter code: MVDKRESYTKEDLLASGRGELFGAKGPQLPAPNMLMMDRVVKMTETGGNFDKGYVEAELDINPDLWFFGCHFIGDPVMPGCLGLDAMWQLVGFYLGWLGGEGKGRALGVGEVKFTGQVLPTAKKVTYRIHFKRIVNRRLIMGLADGEVLVDGRLIYTANDLKVGLFQDTSAF.

H71 is an active-site residue.

Belongs to the thioester dehydratase family. FabA subfamily. Homodimer.

The protein resides in the cytoplasm. The enzyme catalyses a (3R)-hydroxyacyl-[ACP] = a (2E)-enoyl-[ACP] + H2O. It carries out the reaction (3R)-hydroxydecanoyl-[ACP] = (2E)-decenoyl-[ACP] + H2O. The catalysed reaction is (2E)-decenoyl-[ACP] = (3Z)-decenoyl-[ACP]. It participates in lipid metabolism; fatty acid biosynthesis. Necessary for the introduction of cis unsaturation into fatty acids. Catalyzes the dehydration of (3R)-3-hydroxydecanoyl-ACP to E-(2)-decenoyl-ACP and then its isomerization to Z-(3)-decenoyl-ACP. Can catalyze the dehydratase reaction for beta-hydroxyacyl-ACPs with saturated chain lengths up to 16:0, being most active on intermediate chain length. The sequence is that of 3-hydroxydecanoyl-[acyl-carrier-protein] dehydratase from Escherichia coli O127:H6 (strain E2348/69 / EPEC).